Consider the following 190-residue polypeptide: Large ribosomal subunit protein uL6A (190 aa).

It belongs to the universal ribosomal protein uL6 family. In terms of assembly, component of the large ribosomal subunit (LSU). Mature yeast ribosomes consist of a small (40S) and a large (60S) subunit. The 40S small subunit contains 1 molecule of ribosomal RNA (18S rRNA) and at least 33 different proteins. The large 60S subunit contains 3 rRNA molecules (25S, 5.8S and 5S rRNA) and at least 46 different proteins. uL6 lines the binding pocket for eukaryotic elongation factor 2 (eEF2).

It localises to the cytoplasm. The protein resides in the nucleus. Component of the ribosome, a large ribonucleoprotein complex responsible for the synthesis of proteins in the cell. The small ribosomal subunit (SSU) binds messenger RNAs (mRNAs) and translates the encoded message by selecting cognate aminoacyl-transfer RNA (tRNA) molecules. The large subunit (LSU) contains the ribosomal catalytic site termed the peptidyl transferase center (PTC), which catalyzes the formation of peptide bonds, thereby polymerizing the amino acids delivered by tRNAs into a polypeptide chain. The nascent polypeptides leave the ribosome through a tunnel in the LSU and interact with protein factors that function in enzymatic processing, targeting, and the membrane insertion of nascent chains at the exit of the ribosomal tunnel. This Schizosaccharomyces pombe (strain 972 / ATCC 24843) (Fission yeast) protein is Large ribosomal subunit protein uL6A (rpl901).